The chain runs to 101 residues: Protein Tat (101 aa).

Residues 1–20 are disordered; sequence MEPVDPSLEPWKHPGSQPKT. The segment at 1–24 is interaction with human CREBBP; the sequence is MEPVDPSLEPWKHPGSQPKTACTN. A transactivation region spans residues 1-48; sequence MEPVDPSLEPWKHPGSQPKTACTNCYCKKCCLHCQVCFTTKGLGISYG. 3 residues coordinate Zn(2+): Cys-22, Cys-25, and Cys-27. Residues 22–37 form a cysteine-rich region; that stretch reads CTNCYCKKCCLHCQVC. Lys-28 is modified (N6-acetyllysine; by host PCAF). Zn(2+)-binding residues include Cys-30, His-33, Cys-34, and Cys-37. Residues 38-48 are core; it reads FTTKGLGISYG. A disordered region spans residues 45 to 101; sequence ISYGRKKRRQRRRPPQDSQTHQVSLPKQPSSQQRGDPTGPKESKKKVERETETDPDN. The segment covering 48–57 has biased composition (basic residues); sequence GRKKRRQRRR. The Nuclear localization signal, RNA-binding (TAR), and protein transduction signature appears at 49–57; that stretch reads RKKRRQRRR. The interaction with the host capping enzyme RNGTT stretch occupies residues 49-86; sequence RKKRRQRRRPPQDSQTHQVSLPKQPSSQQRGDPTGPKE. N6-acetyllysine; by host EP300 and GCN5L2 is present on residues Lys-50 and Lys-51. Asymmetric dimethylarginine; by host PRMT6 is present on residues Arg-52 and Arg-53. The span at 61 to 79 shows a compositional bias: polar residues; it reads DSQTHQVSLPKQPSSQQRG. A Glycyl lysine isopeptide (Lys-Gly) (interchain with G-Cter in ubiquitin) cross-link involves residue Lys-71. Positions 78 to 80 match the Cell attachment site motif; it reads RGD. A compositionally biased stretch (basic and acidic residues) spans 83 to 101; the sequence is GPKESKKKVERETETDPDN.

It belongs to the lentiviruses Tat family. In terms of assembly, interacts with host CCNT1. Associates with the P-TEFb complex composed at least of Tat, P-TEFb (CDK9 and CCNT1), TAR RNA, RNA Pol II. Recruits the HATs CREBBP, TAF1/TFIID, EP300, PCAF and GCN5L2. Interacts with host KAT5/Tip60; this interaction targets the latter to degradation. Interacts with the host deacetylase SIRT1. Interacts with host capping enzyme RNGTT; this interaction stimulates RNGTT. Binds to host KDR, and to the host integrins ITGAV/ITGB3 and ITGA5/ITGB1. Interacts with host KPNB1/importin beta-1 without previous binding to KPNA1/importin alpha-1. Interacts with EIF2AK2. Interacts with host nucleosome assembly protein NAP1L1; this interaction may be required for the transport of Tat within the nucleus, since the two proteins interact at the nuclear rim. Interacts with host C1QBP/SF2P32; this interaction involves lysine-acetylated Tat. Interacts with the host chemokine receptors CCR2, CCR3 and CXCR4. Interacts with host DPP4/CD26; this interaction may trigger an anti-proliferative effect. Interacts with host LDLR. Interacts with the host extracellular matrix metalloproteinase MMP1. Interacts with host PRMT6; this interaction mediates Tat's methylation. Interacts with, and is ubiquitinated by MDM2/Hdm2. Interacts with host PSMC3 and HTATIP2. Interacts with STAB1; this interaction may overcome SATB1-mediated repression of IL2 and IL2RA (interleukin) in T cells by binding to the same domain than HDAC1. Interacts (when acetylated) with human CDK13, thereby increasing HIV-1 mRNA splicing and promoting the production of the doubly spliced HIV-1 protein Nef. Interacts with host TBP; this interaction modulates the activity of transcriptional pre-initiation complex. Interacts with host RELA. Interacts with host PLSCR1; this interaction negatively regulates Tat transactivation activity by altering its subcellular distribution. Asymmetrical arginine methylation by host PRMT6 seems to diminish the transactivation capacity of Tat and affects the interaction with host CCNT1. In terms of processing, acetylation by EP300, CREBBP, GCN5L2/GCN5 and PCAF regulates the transactivation activity of Tat. EP300-mediated acetylation of Lys-50 promotes dissociation of Tat from the TAR RNA through the competitive binding to PCAF's bromodomain. In addition, the non-acetylated Tat's N-terminus can also interact with PCAF. PCAF-mediated acetylation of Lys-28 enhances Tat's binding to CCNT1. Lys-50 is deacetylated by SIRT1. Post-translationally, polyubiquitination by host MDM2 does not target Tat to degradation, but activates its transactivation function and fosters interaction with CCNT1 and TAR RNA. Phosphorylated by EIF2AK2 on serine and threonine residues adjacent to the basic region important for TAR RNA binding and function. Phosphorylation of Tat by EIF2AK2 is dependent on the prior activation of EIF2AK2 by dsRNA.

The protein resides in the host nucleus. It is found in the host nucleolus. Its subcellular location is the host cytoplasm. It localises to the secreted. Transcriptional activator that increases RNA Pol II processivity, thereby increasing the level of full-length viral transcripts. Recognizes a hairpin structure at the 5'-LTR of the nascent viral mRNAs referred to as the transactivation responsive RNA element (TAR) and recruits the cyclin T1-CDK9 complex (P-TEFb complex) that will in turn hyperphosphorylate the RNA polymerase II to allow efficient elongation. The CDK9 component of P-TEFb and other Tat-activated kinases hyperphosphorylate the C-terminus of RNA Pol II that becomes stabilized and much more processive. Other factors such as HTATSF1/Tat-SF1, SUPT5H/SPT5, and HTATIP2 are also important for Tat's function. Besides its effect on RNA Pol II processivity, Tat induces chromatin remodeling of proviral genes by recruiting the histone acetyltransferases (HATs) CREBBP, EP300 and PCAF to the chromatin. This also contributes to the increase in proviral transcription rate, especially when the provirus integrates in transcriptionally silent region of the host genome. To ensure maximal activation of the LTR, Tat mediates nuclear translocation of NF-kappa-B by interacting with host RELA. Through its interaction with host TBP, Tat may also modulate transcription initiation. Tat can reactivate a latently infected cell by penetrating in it and transactivating its LTR promoter. In the cytoplasm, Tat is thought to act as a translational activator of HIV-1 mRNAs. In terms of biological role, extracellular circulating Tat can be endocytosed by surrounding uninfected cells via the binding to several surface receptors such as CD26, CXCR4, heparan sulfate proteoglycans (HSPG) or LDLR. Neurons are rarely infected, but they internalize Tat via their LDLR. Through its interaction with nuclear HATs, Tat is potentially able to control the acetylation-dependent cellular gene expression. Modulates the expression of many cellular genes involved in cell survival, proliferation or in coding for cytokines or cytokine receptors. Tat plays a role in T-cell and neurons apoptosis. Tat induced neurotoxicity and apoptosis probably contribute to neuroAIDS. Circulating Tat also acts as a chemokine-like and/or growth factor-like molecule that binds to specific receptors on the surface of the cells, affecting many cellular pathways. In the vascular system, Tat binds to ITGAV/ITGB3 and ITGA5/ITGB1 integrins dimers at the surface of endothelial cells and competes with bFGF for heparin-binding sites, leading to an excess of soluble bFGF. This chain is Protein Tat, found in Homo sapiens (Human).